Reading from the N-terminus, the 121-residue chain is MDKTQSRLRRARQTRIKIAELQVARLAVHRTNTHIYAQVFSPCGTKVLASASTLEAEVRAQLADQTGKGGNVNAATLIGKRIAEKAKAAGIESVAFDRSGFRYHGRVKALADAAREAGLKF.

This sequence belongs to the universal ribosomal protein uL18 family. Part of the 50S ribosomal subunit; part of the 5S rRNA/L5/L18/L25 subcomplex. Contacts the 5S and 23S rRNAs.

In terms of biological role, this is one of the proteins that bind and probably mediate the attachment of the 5S RNA into the large ribosomal subunit, where it forms part of the central protuberance. This is Large ribosomal subunit protein uL18 from Paraburkholderia phytofirmans (strain DSM 17436 / LMG 22146 / PsJN) (Burkholderia phytofirmans).